The primary structure comprises 418 residues: Putative ion-transport protein YfeO (418 aa).

A run of 12 helical transmembrane segments spans residues 10 to 30 (LLLS…LIVV), 54 to 74 (DSPL…GLVI), 99 to 119 (ALPG…SLGP), 120 to 140 (EHPI…RLLP), 149 to 169 (ILAS…AALI), 186 to 206 (LFAP…FFHP), 223 to 243 (ILSG…AVWC), 258 to 278 (VLVL…GGPV), 300 to 320 (DYFL…ASGF), 322 to 342 (GGRI…LHEH), 343 to 363 (VPAV…VLVV), and 371 to 391 (LFMA…CIVM).

It belongs to the chloride channel (TC 2.A.49) family.

The protein localises to the cell membrane. The sequence is that of Putative ion-transport protein YfeO from Shigella boydii serotype 18 (strain CDC 3083-94 / BS512).